Reading from the N-terminus, the 319-residue chain is DNA-directed RNA polymerase subunit alpha (319 aa).

The tract at residues 1-227 (MKEFIFPMKI…KHMNMLTNIS (227 aa)) is alpha N-terminal domain (alpha-NTD). Positions 242–319 (LMEKLTFSIE…NIGEQRSSEV (78 aa)) are alpha C-terminal domain (alpha-CTD).

This sequence belongs to the RNA polymerase alpha chain family. As to quaternary structure, homodimer. The RNAP catalytic core consists of 2 alpha, 1 beta, 1 beta' and 1 omega subunit. When a sigma factor is associated with the core the holoenzyme is formed, which can initiate transcription.

The catalysed reaction is RNA(n) + a ribonucleoside 5'-triphosphate = RNA(n+1) + diphosphate. In terms of biological role, DNA-dependent RNA polymerase catalyzes the transcription of DNA into RNA using the four ribonucleoside triphosphates as substrates. This Hydrogenobaculum sp. (strain Y04AAS1) protein is DNA-directed RNA polymerase subunit alpha.